The following is a 159-amino-acid chain: Abscisic acid and environmental stress-inducible protein (159 aa).

6 repeat units span residues 38–49, 50–61, 63–74, 77–88, 91–102, and 105–116. Positions 38 to 135 are 7 X 12 AA repeats of G-G-G-Y-N-H-G-G-G-Y-N; the sequence is GGGYNHGGGG…GYNHGGGGCQ (98 aa). One copy of the 7; approximate repeat lies at 124 to 135; that stretch reads GGGYNHGGGGCQ.

It belongs to the GRP family.

The sequence is that of Abscisic acid and environmental stress-inducible protein from Medicago sativa subsp. falcata (Sickle medic).